The primary structure comprises 190 residues: Protein A52 (190 aa).

The protein belongs to the orthopoxvirus A52R protein family. As to quaternary structure, interacts with host TRAF6 and IRAK2.

Functionally, bcl-2-like protein which targets host toll-like receptor signaling complexes to suppress innate immune response. Interacts with host TRAF6 to activate p38 and subsequently induce the expression of several cytokines such as IL-10. Also associates with host IRAK2 to inhibit NF-kappa-B signaling. This Homo sapiens (Human) protein is Protein A52.